We begin with the raw amino-acid sequence, 259 residues long: Potassium/proton antiporter CemA (259 aa).

Transmembrane regions (helical) follow at residues 47 to 67 (CLLV…EPWV), 136 to 156 (IITH…YLVM), 184 to 204 (ILLA…ELLI), and 219 to 239 (IISS…KYWI).

This sequence belongs to the CemA family.

The protein localises to the plastid. The protein resides in the chloroplast inner membrane. The catalysed reaction is K(+)(in) + H(+)(out) = K(+)(out) + H(+)(in). Functionally, contributes to K(+)/H(+) antiport activity by supporting proton efflux to control proton extrusion and homeostasis in chloroplasts in a light-dependent manner to modulate photosynthesis. Prevents excessive induction of non-photochemical quenching (NPQ) under continuous-light conditions. Indirectly promotes efficient inorganic carbon uptake into chloroplasts. This chain is Potassium/proton antiporter CemA, found in Welwitschia mirabilis (Tree tumbo).